A 134-amino-acid polypeptide reads, in one-letter code: Small ribosomal subunit protein uS11 (134 aa).

Disordered stretches follow at residues M1–A22 and S114–V134. The span at A9–A22 shows a compositional bias: basic residues.

It belongs to the universal ribosomal protein uS11 family. As to quaternary structure, part of the 30S ribosomal subunit. Interacts with proteins S7 and S18. Binds to IF-3.

In terms of biological role, located on the platform of the 30S subunit, it bridges several disparate RNA helices of the 16S rRNA. Forms part of the Shine-Dalgarno cleft in the 70S ribosome. The sequence is that of Small ribosomal subunit protein uS11 from Streptomyces coelicolor (strain ATCC BAA-471 / A3(2) / M145).